A 306-amino-acid polypeptide reads, in one-letter code: Homoserine O-acetyltransferase (306 aa).

Cys-142 acts as the Acyl-thioester intermediate in catalysis. The substrate site is built by Lys-163 and Ser-194. His-237 (proton acceptor) is an active-site residue. Residue Glu-239 is part of the active site. Arg-251 serves as a coordination point for substrate.

This sequence belongs to the MetA family.

Its subcellular location is the cytoplasm. The catalysed reaction is L-homoserine + acetyl-CoA = O-acetyl-L-homoserine + CoA. The protein operates within amino-acid biosynthesis; L-methionine biosynthesis via de novo pathway; O-acetyl-L-homoserine from L-homoserine: step 1/1. Transfers an acetyl group from acetyl-CoA to L-homoserine, forming acetyl-L-homoserine. This is Homoserine O-acetyltransferase from Clostridium tetani (strain Massachusetts / E88).